A 193-amino-acid chain; its full sequence is Large ribosomal subunit protein bL9 (193 aa).

Residues 155-193 (AEGETLTSAEAIYDIQEKPLAENQEEMNDNDANSINEQA) form a disordered region. Polar residues predominate over residues 184–193 (NDANSINEQA).

It belongs to the bacterial ribosomal protein bL9 family.

Binds to the 23S rRNA. This Bartonella quintana (strain Toulouse) (Rochalimaea quintana) protein is Large ribosomal subunit protein bL9.